Reading from the N-terminus, the 100-residue chain is Large ribosomal subunit protein bL21 (100 aa).

The protein belongs to the bacterial ribosomal protein bL21 family. In terms of assembly, part of the 50S ribosomal subunit. Contacts protein L20.

In terms of biological role, this protein binds to 23S rRNA in the presence of protein L20. The polypeptide is Large ribosomal subunit protein bL21 (Mycoplasma capricolum subsp. capricolum (strain California kid / ATCC 27343 / NCTC 10154)).